Reading from the N-terminus, the 117-residue chain is Translation initiation factor 1A (117 aa).

The S1-like domain maps to 17–92 (IRVPLPDRSK…ERGDIVYRYT (76 aa)).

Belongs to the eIF-1A family.

Functionally, seems to be required for maximal rate of protein biosynthesis. Enhances ribosome dissociation into subunits and stabilizes the binding of the initiator Met-tRNA(I) to 40 S ribosomal subunits. The sequence is that of Translation initiation factor 1A from Thermococcus kodakarensis (strain ATCC BAA-918 / JCM 12380 / KOD1) (Pyrococcus kodakaraensis (strain KOD1)).